Here is a 1556-residue protein sequence, read N- to C-terminus: Ubiquitin carboxyl-terminal hydrolase 47 (1556 aa).

A disordered region spans residues 117-231; sequence MKSDGEKAKS…AKKTAKVTSK (115 aa). The segment covering 146-156 has biased composition (low complexity); the sequence is ASGSSSPSKAK. Phosphoserine is present on residues serine 172 and serine 173. Low complexity predominate over residues 180-189; the sequence is IKTTAAKISK. A compositionally biased stretch (basic and acidic residues) spans 191–200; sequence GSEKAPRASP. Positions 208 to 219 are enriched in polar residues; it reads TEINSKNTSSES. The residue at position 238 (serine 238) is a Phosphoserine. Positions 396–779 constitute a USP domain; that stretch reads VGLVNQAMTC…NAYMLMYRQV (384 aa). The Nucleophile role is filled by cysteine 405. Polar residues-rich tracts occupy residues 628 to 642 and 661 to 673; these read NRSGNSGEQNSQLNG and LSSGVVTTASSSQ. The segment at 628 to 697 is disordered; it reads NRSGNSGEQN…SSSTSKSAKQ (70 aa). The span at 688-697 shows a compositional bias: low complexity; that stretch reads SSSTSKSAKQ. Histidine 720 (proton acceptor) is an active-site residue. The tract at residues 1087–1148 is disordered; that stretch reads EPMSQPSPSH…LSSPEDEAAS (62 aa). Basic and acidic residues predominate over residues 1109-1125; the sequence is DGDRTLVETDNMAHRGG. Positions 1128–1141 are enriched in low complexity; sequence SQVSSTSHSPQLSS. A phosphoserine mark is found at serine 1131, serine 1132, serine 1140, serine 1141, serine 1199, serine 1201, and serine 1205.

This sequence belongs to the peptidase C19 family. As to quaternary structure, interacts with ttk.

Its subcellular location is the nucleus. It carries out the reaction Thiol-dependent hydrolysis of ester, thioester, amide, peptide and isopeptide bonds formed by the C-terminal Gly of ubiquitin (a 76-residue protein attached to proteins as an intracellular targeting signal).. Ubiquitin-specific protease that deubiquitinates target proteins to regulate different cellular and developmental pathways. Functions downstream of Dsor1/MEK to positively regulate the Ras/MAPK signaling pathway. Likely to modulate the pathway during various cellular and developmental processes including rl/MAPK activation by the receptors InR, Egfr and sevenless/sev. Functions in the post-translational stabilization of rl/MAPK levels in a mechanism that is independent of rl activity and opposes the activity of the E2 enzyme Unc6 and the putative E3 ligases poe, Ufd4 and Kcmf1, which mediate the ubiquitination and proteasomal degradation of rl. During eye development it may also act downstream of rl/MAPK to negatively regulate the Ras/MAPK signaling pathway by stabilizing the transcriptional repressor ttk and consequently inhibiting photoreceptor cell development. This suggests that at least during eye development, it may act in both the positive and negative regulation of the Ras/MAPK signaling pathway to mediate the development of different cell types. Positively regulates border follicle cell migration during oogenesis by mediating the deubiquitination and stabilization of slbo. In the wing disks it positively regulates wg signaling by stabilizing arm. Has an effect on position-effect variegation. The chain is Ubiquitin carboxyl-terminal hydrolase 47 from Drosophila melanogaster (Fruit fly).